The sequence spans 104 residues: Translation initiation factor 1A (104 aa).

The segment covering 1–14 (MRGQQTPPQQPTRV) has biased composition (low complexity). The tract at residues 1–20 (MRGQQTPPQQPTRVRTPREN) is disordered. The S1-like domain maps to 12 to 87 (TRVRTPRENE…EKCDVIWRYT (76 aa)).

The protein belongs to the eIF-1A family.

Seems to be required for maximal rate of protein biosynthesis. Enhances ribosome dissociation into subunits and stabilizes the binding of the initiator Met-tRNA(I) to 40 S ribosomal subunits. The polypeptide is Translation initiation factor 1A (Methanococcus maripaludis (strain DSM 14266 / JCM 13030 / NBRC 101832 / S2 / LL)).